The chain runs to 204 residues: Chaperone protein TorD (204 aa).

The protein belongs to the TorD/DmsD family. TorD subfamily.

The protein resides in the cytoplasm. Functionally, involved in the biogenesis of TorA. Acts on TorA before the insertion of the molybdenum cofactor and, as a result, probably favors a conformation of the apoenzyme that is competent for acquiring the cofactor. This is Chaperone protein TorD from Shewanella baltica (strain OS223).